The chain runs to 206 residues: Dephospho-CoA kinase (206 aa).

One can recognise a DPCK domain in the interval 4-200 (IVALTGGIGS…HRYLKLATAA (197 aa)). 12 to 17 (GSGKST) contacts ATP.

It belongs to the CoaE family.

Its subcellular location is the cytoplasm. It catalyses the reaction 3'-dephospho-CoA + ATP = ADP + CoA + H(+). Its pathway is cofactor biosynthesis; coenzyme A biosynthesis; CoA from (R)-pantothenate: step 5/5. Its function is as follows. Catalyzes the phosphorylation of the 3'-hydroxyl group of dephosphocoenzyme A to form coenzyme A. The chain is Dephospho-CoA kinase from Yersinia pestis.